Consider the following 112-residue polypeptide: QWLSFLGEAYEGAKDMWRAYSDMREANFKGADKYFHARGNYDAAQRGPGGVWAAEVISNGREALQGITDPLFKGMTRDQVREDTKADQFANEWGRSGKDPNHFRPPGLPDKY.

Glutamine 1 carries the post-translational modification Pyrrolidone carboxylic acid. A compositionally biased stretch (basic and acidic residues) spans 75-86 (MTRDQVREDTKA). A disordered region spans residues 75–112 (MTRDQVREDTKADQFANEWGRSGKDPNHFRPPGLPDKY).

The protein belongs to the SAA family. Expressed by the liver; secreted in plasma.

It localises to the secreted. In terms of biological role, major acute phase reactant. Apolipoprotein of the HDL complex. The polypeptide is Serum amyloid A protein (SAA1) (Ovis aries (Sheep)).